A 341-amino-acid chain; its full sequence is tRNA N6-adenosine threonylcarbamoyltransferase (341 aa).

Residues His111 and His115 each contribute to the Fe cation site. Substrate is bound by residues 134–138 (LVSGG), Asp167, Gly180, and Asn276. Asp304 contacts Fe cation.

The protein belongs to the KAE1 / TsaD family. Fe(2+) is required as a cofactor.

It is found in the cytoplasm. It carries out the reaction L-threonylcarbamoyladenylate + adenosine(37) in tRNA = N(6)-L-threonylcarbamoyladenosine(37) in tRNA + AMP + H(+). In terms of biological role, required for the formation of a threonylcarbamoyl group on adenosine at position 37 (t(6)A37) in tRNAs that read codons beginning with adenine. Is involved in the transfer of the threonylcarbamoyl moiety of threonylcarbamoyl-AMP (TC-AMP) to the N6 group of A37, together with TsaE and TsaB. TsaD likely plays a direct catalytic role in this reaction. This Stutzerimonas stutzeri (strain A1501) (Pseudomonas stutzeri) protein is tRNA N6-adenosine threonylcarbamoyltransferase.